We begin with the raw amino-acid sequence, 229 residues long: ATP-dependent dethiobiotin synthetase BioD (229 aa).

12-17 (GVGKTV) serves as a coordination point for ATP. Thr16 is a Mg(2+) binding site. Lys37 is a catalytic residue. Position 41 (Thr41) interacts with substrate. Residues Asp53, 112–115 (EGAG), and 201–203 (PAG) each bind ATP. Mg(2+)-binding residues include Asp53 and Glu112.

This sequence belongs to the dethiobiotin synthetase family. Homodimer. Mg(2+) serves as cofactor.

The protein resides in the cytoplasm. The enzyme catalyses (7R,8S)-7,8-diammoniononanoate + CO2 + ATP = (4R,5S)-dethiobiotin + ADP + phosphate + 3 H(+). It functions in the pathway cofactor biosynthesis; biotin biosynthesis; biotin from 7,8-diaminononanoate: step 1/2. In terms of biological role, catalyzes a mechanistically unusual reaction, the ATP-dependent insertion of CO2 between the N7 and N8 nitrogen atoms of 7,8-diaminopelargonic acid (DAPA, also called 7,8-diammoniononanoate) to form a ureido ring. The chain is ATP-dependent dethiobiotin synthetase BioD from Mycobacterium sp. (strain JLS).